The chain runs to 4334 residues: MSSDSRKTFVVTTIACAIAPAGQQDQYAAYLGQDENGAIASFLDSTQNTLQAGVSGLGTGQLQLKLSNAAEFPEGCEFSVVLSKLRAGPIRTEDVPAGVAVATVAHSPLSSLYHTLKDVYSPLIKSQTAEGVPVLDKRLSELLAQVQAGLGTAVRKGVPASAQEVADPNQAPLQEVVTPLDEINFWAELTNSPNAGPIKSSALQVSSALEPLRQSFEQLSSDAPEGEGGSIGWEGAKELVDLTTNALRAAWPVKLPIGGWAMGQKRADNFLRVVGAALATYVQRRVDRLAAAGRGDLWSAPFGEVRAVLVGASGLMTRWVQESTALVEDWRLGVDTGGHDWEGAAFADAYVRSFQERLEEIYNMREMVDELAKLVGREEAGSLGVQQVFAPFQGLQALQVSDFNTHVWKAAHEDFERRMGPIEQRISQKLKELFASVIIPSLTSAIGPGRGGDRAAAGGSLIQPQQVFAEIKRYSSLMGRKNIASALQSEKETLAKQVDRHLDSVQAEFDAHRDSATGGAKVAPVGRVTASIVERIMWCMQTLQKLGKVSEVLKHMLRGGVAGDEGSGGAALRNTLGVVSELQKEVEIFRKEQYSAWEEWMSEELGEMANWKNSKLMTFDSQNSHVKTHFNDQLVLLLREVRQLQSLGFGVRKDILNEVEIANKFYRYGMVLKQRANFYNNIATEMVQCQKPMMLKDALDFEKVLMNPKDAQGKEITWRNAAALDGYVRRLNEVADRLAEKNRTLRKWHSVLSDKVVTLAGTDLVRHKDKWAAGVKEMREIFGRLEAEGYSRESQQVWRQHWDFQLYKALEVQYLSGLEMINKTLPEVEVKMVFRQHRLQYDPPLEELRIRHVKDLLNTFLGLPLRMKGVSDLSERPGFFRPIVDANPTGIARVYAAAESLFTQLADELKKYQDWMVLGTLDLDEFADANLLEVSDWELNFRMLKAASRDAEKLPNEIRIECYKVSLAPVKGSIDEHMKKLQDTLVASLRRKTVAEKDQIEDFMKNGRELFTRQANTVEDIGLAGQEAKGLTAKLAEVQAARRRIDEKNKLLRQMAGGGRDAAFAVVDLTEVNNSWDAFTNQLQQFDAHLEEQKGNLAVQISRQLEEFKGKVAGMNSRWQELKPKSGPSGNPAVVLAKIQEYANAIKELREESAKLYKEAEAFKIDVPDFELMTEMETDVMATKAHWDRYADFLRERDEMANRDWLSMRDQVWKIEDFLAKWTKATAGKSDDPIAVILTQEIDNYTLCLPHLKSCLRGAGWEDTHWNQLFGLLGMKTSGPAAVSKETVTLTHFLEKADLVVKHADVIKSLDAQAQGEAVIRKALTELKMWGMAREFTFTESTQSVAGRQRRTPLIKEWRDAMTEVGDNQSLVASLKQSSYYNMFKDEVSSWENKLSFLQEGLTLLNQIQRKWVYLEPIFGRGALPSQQQRFRNVDEEFRRTMTSLESTKKVVTFADIPGIRDKLPQMAQQLDVCQRALADFLEEKRSQFPRFYFLGDDDLLEILGQARNPAVIQSHLKKLFAGIQKVKFSQDQSTIQAMQSMEGEVVDLAPTVRITEQIETWLGDLTRSMKNTLQQQNEVLCAGRMNDEFRAAASQCLQLKEAVAFTEKAEVALKAGSSGLAKLVTEMRAQLMKLTGSDFTGHHLLQLKKQALVLDFIHYCDVAEYLAKDKIGGTTEWGWTRQLRYYHRAEGSVKVAMAEATFDYTWEYQGNAAKLVYTPLTDKCYLTLTQGMALGYGGNPYGPAGTGKTESVKALGQALARQVLVFNCDEEFDFKSMGRIFVGLVKCGAWGCFDEFNRLDEEVLSAVSQQIQTIQLALKEGAKTMMFMDKTVEVDKNAGIFVTLNPAGKGYGGRSKLPDNLKQLFRSIAMTVPNNELIAEVLLLSEGFNHAKDLARKLVSLFSLSRELLSPQQHYDWGLRALKTVLGIAGRELRDARKAGQNVDAEIEAEIIIRSVAATKLPTLTFDDNSRFKALINDLFPGAKLTDARNEALEKALAEAAAACKMELTQQQIDRMLQLHLACEQRIGVIIVGPSGSGKSTLWELLEKAYERLGRKPIVYKMNPKAMPRQQLLGSMNMDTREWSDGVLTAAARKVVKEPLEQRSWIICDGDVDPEWIESLNSVLDDNRLLTMPNGERIQFANNVNFIFECHSLEFASPATVSRCGMLFMSDEAMEVERMLQRWLKVQATDNGDPGQMQSWMNDFFDKAFQWALSHPRAVETTKGGILDSGLSHLKLGPGSKQEFMAGLCRGLGSNMNPDIRNQFYNDMARMSGEGGIMDVGVATDPLIVLGDELRERGMDEADGGLVVTPEVTQNLLMMAPWFKNRDPFLVVGPEGCGKGALLDYCFKRIMGVQVAVVNCSAQTSAANVVQKLVQVCGKPVTTTSGKALRPPDNTRVILYLKDLNLPRPDKYNTCQLISFLQQLIAHHGYYDENLDFIRVERVQIVGSMTPPGSVGRHALSTRFTALVRIVTMGYPDRENLATIYTNMAQRVLANSKTASSVSPAALSKAMLEVYSSVRERFTPNDYPHYEFNARELSDWINGIQRYSLEGGLTLVQAIAHEGLRVFRDRLVGDHQEQFTSMLYGTLTSLLGYKPDATPWYTSTLGASAEERISGDLTKIKMLRWEQDTFAELVAEKLKGYEREHKELNLLLFPEVLERVSRFDRVLSQQGGSLLLCGNSGVGRRSLMLLLAYMHNMDFITPKMTKNYDLKSFRNDLKEVLRRAGVEAKPVMLFLEDHQLVNNAFLELVNSLLSGGEVPGLFTPEELAKELAPLDKARDEDPLYTGPSNSYAFFSYRIRRNLHIVVSMDPSNEMFRSRCEANPALFTRCSVQWLEGWSVKGLQQIAAARLTELVESSPELMKLGRDKLINHMIHIHASSGSQTTREYLALVSLYGQIYNRKRTQVLEQQNFLKGGLGKLAEAAVTVDTLSAEAEKQRVVLKAKQAEADEALVHIQDSMLKAADRRKEVEVLKKRTAIEEVEMKERRVKVEEELSEVQPLIDAARKAVGNIKKDNIAEIRSLKMPPDAIRDVLEGVLMVLGQQDTSWNNMKTFLGKGSVKDDIINYDAHKITPEIRARCAKLLAAKGNSFEDAVIRRVSVAAAPMAQWFKANLEFSKVLERVSPLESELHRLQSSLEESQRLIKQYEEELVQLDAAVASLKAEFSKKTSEAETLKISVDKAESVLSSARQLLDGLRGEKVRWEITVGTLGEQLKELPLSSLLAAAFITYLPSHPEEHRLKVTKDWCAYLGAAEFDVTRFLSSESEMLKWKAEGLPADGLSAQNAVVILNSTSRSPLIIDPSTQASEWLKSHLRVTGQNVEVTTMADQRFTTTLELAVRFGKTLVVAEVDKVEPILYPLLRMDLDRQGPRFVVQIGDKATDYNDTFRLFLVTRNPDPYLPPDARSLLAVTNFTVTRSGLEGQLLGLTLQKERPELEEQKSTMLRQEDECKVALAELERNLLQTLATSTGNILENKDLLDKLNETKTRSATVEKALTESKTLQASLDQQREVYRPIAARGSVMYFLLADLQALNQMYTFSLSVFLNLFKKALDRDTPPGGDVTARIALLAESLLELVFAYVSRSLFNADRLTFGMHMARHLQPSLFPEAQWAFFLGKPVPDSASPPPKPSWVREEQAGAFSALAAAFPQLVAAAELADSALWAQWASGATDALPGKIAGGKVNPFQQLLLVKAFRPDRLQSAMSSFICGTLNIKSVSPPPFSLKALIEGETRPDEPVLFITTPGADPSQELSEYAAQTMGKERWYFEVAMGQGQAEKAVTLLRECAKNGDWLVLKNVHLAVSWLPSLEKELLMLQKHDNFRIFLTSEPHPKFPSTLLEMSLKVTFEAPPGMKKNLQRTYEAWSAEYLASGPPIRAQLLFVLAWFHAVVQERRTYIPQGWTKFYEFSFADLRSGMDVITLATRAGTAPQWPLLLGLLDDAIYGGRLDNPFDSQVLLTFLRRLFSAETVGAAGGKVRPLPGSKVVVPTTNHRADYVSIISALPDVDTPGLFCMPDNIDRTAQQVNSARVISQLKAMSLRADAAGGFNRAQWQAQLGPLLRLWDQLMSGASALKAAMKDIRARGTTDKGGAPIENFVALERYKGASLVALIDRTLGAIARVLKGTDTLSSGVQSSGAALLADVIPGSWDAAWEGPEAPMDYCRAVVAKALAIEGHWARCQQPGGGGLLDGSGGAGPLELSSVFHPGTFLNALRQQSARTLGCSMDMLKAVTSWETAKLKAAAGGAPVALLGGLIMQGATFDGSRLSPVAAEAPAFRAVPAMSMAWLHKDSPMAYASYMEAPLYMTSDRSKLLARVQLPVSGPEEMDGWVLAGLSLFLSV.

The tract at residues 1–1704 (MSSDSRKTFV…KVAMAEATFD (1704 aa)) is stem. 150–157 (LGTAVRKG) contacts ATP. Residues 1026–1097 (QEAKGLTAKL…AHLEEQKGNL (72 aa)) are a coiled coil. AAA stretches follow at residues 1705–1929 (YTWE…VLGI), 1996–2211 (KALA…KAFQ), 2299–2544 (GMDE…WING), and 2641–2882 (GYER…SSGS). ATP is bound by residues 1743-1750 (GPAGTGKT), 2034-2041 (GPSGSGKS), 2334-2341 (GPEGCGKG), and 2679-2686 (GNSGVGRR). Residues 2897–3185 (QIYNRKRTQV…ISVDKAESVL (289 aa)) form a stalk region. 2 coiled-coil regions span residues 2930–2998 (LSAE…SEVQ) and 3120–3199 (ERVS…RGEK). AAA regions lie at residues 3260–3492 (LSSE…TVEK) and 3701–3917 (MSSF…VITL).

It belongs to the dynein heavy chain family. The cytoplasmic dynein complex 2 is probably composed by a DHC1B homodimer and a number of D1BLIC light intermediate chains. Interacts with FAP133, FLA10 and LC8.

The protein localises to the cytoplasm. The protein resides in the cytoskeleton. It localises to the flagellum basal body. Its subcellular location is the cell projection. It is found in the cilium. The protein localises to the flagellum membrane. In terms of biological role, may function as a motor for intraflagellar retrograde transport. Functions in flagellar biogenesis. The polypeptide is Cytoplasmic dynein 2 heavy chain 1 (DHC1B) (Chlamydomonas reinhardtii (Chlamydomonas smithii)).